The primary structure comprises 185 residues: uncharacterized protein (185 aa).

The protein belongs to the EUO family.

This is an uncharacterized protein from Chlamydia muridarum (strain MoPn / Nigg).